Here is a 1170-residue protein sequence, read N- to C-terminus: Type I restriction enzyme EcoKI endonuclease subunit (1170 aa).

Residues 143–229 (YHQEVLTLKQ…QERKAYHKEI (87 aa)) are a coiled coil. The H-T-H motif DNA-binding region spans 431-450 (NQWFADNPGMSELGLRYYQE). One can recognise a Helicase ATP-binding domain in the interval 458 to 639 (KAIVKGQQEI…GEPVYRYTYR (182 aa)). Position 472 to 478 (472 to 478 (ATGTGKT)) interacts with ATP. A DEAH box motif is present at residues 574-577 (DEAH). The Helicase C-terminal domain maps to 714–879 (ELTNYLDPTG…TLVNEITDSE (166 aa)).

It belongs to the HsdR family. The type I restriction/modification system is composed of three polypeptides R, M and S. The restriction enzyme has stoichiometry R(2)M(2)S(1). The methyltransferase is composed of M(2)S(1). As to quaternary structure, (Microbial infection) Interacts with Escherichia phage T7 protein Ocr; this interaction leads to the inhibition of the type I bifunctional endonuclease and methyltransferase restriction enzyme R.EcoKI composed of R(2)M(2)S(1). In terms of processing, upon purification after overexpression about one-third has the initiating methionine removed.

The catalysed reaction is Endonucleolytic cleavage of DNA to give random double-stranded fragments with terminal 5'-phosphates, ATP is simultaneously hydrolyzed.. In terms of biological role, the subtype A restriction (R) subunit of a type I restriction enzyme that recognizes 5'-AACN(6)GTGC-3' and cleaves a random distance away. The R subunit is required for both endonuclease and ATPase activities but not for modification. Has endonucleolytic activity that requires Mg(2+), ATP and S-adenosyl-L-methionine (SAM); ATP can be replaced by dATP, no tested molecule could substitute for SAM. Generates double-stranded DNA with no nicks, by cutting one strand then the other within a few seconds. Cleaves only non-methylated DNA, hemi-methylated and fully methylated DNA are not substrates. After locating a non-methylated recognition site, the enzyme complex serves as a molecular motor that translocates DNA in an ATP-dependent manner until a collision occurs that triggers cleavage. This is Type I restriction enzyme EcoKI endonuclease subunit from Escherichia coli (strain K12).